Consider the following 130-residue polypeptide: MRHYEIVFMVHPDQSEQVPGMIERYSATITNAAGTIHRLEDWGRRQLAYPISKLHKAHYVLLNVEAPQEAIDELETNFRFNDAVIRSMVMRVKHAVTEASPMVKAKDERRERHDFASEANDDSEAGDSEE.

Residues 100-130 (SPMVKAKDERRERHDFASEANDDSEAGDSEE) are disordered. A compositionally biased stretch (basic and acidic residues) spans 104–116 (KAKDERRERHDFA). Acidic residues predominate over residues 119 to 130 (ANDDSEAGDSEE).

This sequence belongs to the bacterial ribosomal protein bS6 family.

Its function is as follows. Binds together with bS18 to 16S ribosomal RNA. This is Small ribosomal subunit protein bS6 from Yersinia pestis (strain Pestoides F).